A 214-amino-acid polypeptide reads, in one-letter code: Adenylate kinase (214 aa).

ATP is bound at residue 10–15 (GAGKGT). The segment at 30 to 59 (STGDMFRAAIKAGTELGKQAKALMDEGKLV) is NMP. Residues threonine 31, arginine 36, 57-59 (KLV), 85-88 (GFPR), and glutamine 92 each bind AMP. Positions 122–159 (GRRVHQTSGRSYHIVYNPPKVEGKDDVTGEDLIIRADD) are LID. ATP is bound by residues arginine 123 and 132 to 133 (SY). Residues arginine 156 and arginine 167 each contribute to the AMP site. Glutamine 200 serves as a coordination point for ATP.

Belongs to the adenylate kinase family. As to quaternary structure, monomer.

It localises to the cytoplasm. It catalyses the reaction AMP + ATP = 2 ADP. It functions in the pathway purine metabolism; AMP biosynthesis via salvage pathway; AMP from ADP: step 1/1. In terms of biological role, catalyzes the reversible transfer of the terminal phosphate group between ATP and AMP. Plays an important role in cellular energy homeostasis and in adenine nucleotide metabolism. This is Adenylate kinase from Haemophilus influenzae (strain PittEE).